A 1017-amino-acid chain; its full sequence is Integrator complex subunit 3 (1017 aa).

The segment at 952–1017 is disordered; sequence EYEDSSKPPK…KGSAVGSDSD (66 aa). Positions 983 to 997 are enriched in acidic residues; sequence NEEESVSSSASEEED.

It belongs to the Integrator subunit 3 family. As to quaternary structure, component of the Integrator complex, composed of core subunits INTS1, INTS2, INTS3, INTS4, INTS5, INTS6, INTS7, INTS8, INTS9/RC74, INTS10, INTS11/CPSF3L, INTS12, INTS13, INTS14 and INTS15. The core complex associates with protein phosphatase 2A subunits PPP2CA and PPP2R1A, to form the Integrator-PP2A (INTAC) complex. Component of the SOSS complex.

It localises to the nucleus. Its subcellular location is the cytoplasm. Its function is as follows. Component of the integrator complex, a multiprotein complex that terminates RNA polymerase II (Pol II) transcription in the promoter-proximal region of genes. The integrator complex provides a quality checkpoint during transcription elongation by driving premature transcription termination of transcripts that are unfavorably configured for transcriptional elongation: the complex terminates transcription by (1) catalyzing dephosphorylation of the C-terminal domain (CTD) of Pol II subunit POLR2A/RPB1 and SUPT5H/SPT5, (2) degrading the exiting nascent RNA transcript via endonuclease activity and (3) promoting the release of Pol II from bound DNA. The integrator complex is also involved in terminating the synthesis of non-coding Pol II transcripts, such as enhancer RNAs (eRNAs), small nuclear RNAs (snRNAs), telomerase RNAs and long non-coding RNAs (lncRNAs). Within the integrator complex, INTS3 is involved in the post-termination step: INTS3 binds INTS7 in the open conformation of integrator complex and prevents the rebinding of Pol II to the integrator after termination cycle. Component of the SOSS complex, a multiprotein complex that functions downstream of the MRN complex to promote DNA repair and G2/M checkpoint. The SOSS complex associates with single-stranded DNA at DNA lesions and influences diverse endpoints in the cellular DNA damage response including cell-cycle checkpoint activation, recombinational repair and maintenance of genomic stability. The SOSS complex is required for efficient homologous recombination-dependent repair of double-strand breaks (DSBs) and ATM-dependent signaling pathways. In the SOSS complex, it is required for the assembly of the complex and for stabilization of the complex at DNA damage sites. In Danio rerio (Zebrafish), this protein is Integrator complex subunit 3 (ints3).